A 231-amino-acid polypeptide reads, in one-letter code: Elongation factor 1-delta (231 aa).

The disordered stretch occupies residues 75–136 (SGVTVEGNAP…AAAAAAKPAK (62 aa)). Acidic residues predominate over residues 101–117 (ADDDDDDDVDLFGEETE). Residues 118–127 (EEKKAAEERA) are compositionally biased toward basic and acidic residues.

It belongs to the EF-1-beta/EF-1-delta family. In terms of assembly, EF-1 is composed of 4 subunits: alpha, beta (1B-alpha=beta'), delta (1B-beta), and gamma (1B-gamma).

Functionally, EF-1-beta and EF-1-beta' stimulate the exchange of GDP bound to EF-1-alpha to GTP. The polypeptide is Elongation factor 1-delta (Beta vulgaris (Sugar beet)).